Consider the following 302-residue polypeptide: MTLLSSHLLVFSAVHHRAPPTTTTRNSPTTNHTVRFLCSPGVPPAVRLDQRLPRFVVPGAGAEDLLYNAGATVGVLGGGYALVRAFDELTRRNILQQGLSRKLVHILSGLLFLVSWPIFSNSPKARYFAAFVPLVNCLRLLVNGLSLASDEGLIKSVTREGDPLELLRGPLYYVLILILSALVFWRESPIGVISLAMMCAGDGIADIIGRRYGSMKIPYNEHKSLAGSMSMLVFGFLVSIGMLYYYSVLGHVQLDWASTLPRVAFISFVATLVESLPITKVVDDNISVPLATMAVAFFTFHH.

Residues 1-57 constitute a chloroplast transit peptide; the sequence is MTLLSSHLLVFSAVHHRAPPTTTTRNSPTTNHTVRFLCSPGVPPAVRLDQRLPRFVV. Helical transmembrane passes span 65–83, 103–123, 128–148, 164–184, 189–209, 232–252, and 263–283; these read LLYNAGATVGVLGGGYALV, LVHILSGLLFLVSWPIFSNSP, FAAFVPLVNCLRLLVNGLSLA, LELLRGPLYYVLILILSALVF, PIGVISLAMMCAGDGIADIIG, LVFGFLVSIGMLYYYSVLGHV, and VAFISFVATLVESLPITKVVD.

Belongs to the polyprenol kinase family.

The protein resides in the plastid. The protein localises to the chloroplast membrane. The catalysed reaction is phytol + CTP = phytyl phosphate + CDP + H(+). Its pathway is cofactor biosynthesis; tocopherol biosynthesis. Its function is as follows. Involved in the activation and reutilization of phytol from chlorophyll degradation in plant metabolism, including tocopherol biosynthesis. Catalyzes the conversion of phytol to phytol monophosphate (PMP). The polypeptide is Probable phytol kinase 1, chloroplastic (Glycine max (Soybean)).